Reading from the N-terminus, the 921-residue chain is Collagen alpha-1(IX) chain (921 aa).

A signal peptide spans M1–A23. Residues A24–R268 are nonhelical region (NC4). 2 cysteine pairs are disulfide-bonded: C44–C242 and C198–C252. One can recognise a Laminin G-like domain in the interval G50 to P244. N171 carries N-linked (GlcNAc...) asparagine glycosylation. D213, D215, and H253 together coordinate Zn(2+). 2 disordered regions span residues E254–D759 and R783–S905. 8 Collagen-like domains span residues G269–A324, D325–G356, G358–G403, P416–G472, I473–K516, E587–G643, G655–G712, and L713–R755. The segment at G269–H405 is triple-helical region (COL3). 2 stretches are compositionally biased toward pro residues: residues E273 to V285 and K298 to A307. The segment covering T368–D383 has biased composition (low complexity). Residues R387–P398 show a composition bias toward pro residues. The segment at D406 to P417 is nonhelical region (NC3). A triple-helical region (COL2) region spans residues G418–A756. Residues D479–D489 are compositionally biased toward basic and acidic residues. Composition is skewed to low complexity over residues N602–Q621 and L630–L650. The nonhelical region (NC2) stretch occupies residues P757–S786. The interval G787–C901 is triple-helical region (COL1). Collagen-like domains follow at residues G790–G847 and R848–G899. Residues R794–P804 show a composition bias toward pro residues. Positions P833–P845 are enriched in basic and acidic residues. The span at V888 to L897 shows a compositional bias: pro residues. The nonhelical region (NC1) stretch occupies residues E902 to P921.

The protein belongs to the fibril-associated collagens with interrupted helices (FACIT) family. Heterotrimer of an alpha 1(IX), an alpha 2(IX) and an alpha 3(IX) chain. Covalently linked to the telopeptides of type II collagen by lysine-derived cross-links. In terms of processing, prolines at the third position of the tripeptide repeating unit (G-X-Y) are hydroxylated in some or all of the chains.

It is found in the secreted. The protein localises to the extracellular space. The protein resides in the extracellular matrix. In terms of biological role, structural component of hyaline cartilage and vitreous of the eye. The sequence is that of Collagen alpha-1(IX) chain (COL9A1) from Homo sapiens (Human).